The sequence spans 1082 residues: AP-3 complex subunit beta-2 (1082 aa).

Residues 1–30 (MSAAPAYSEDKGGSAGPGEPEYGHDPASGG) form a disordered region. Serine 272 and serine 282 each carry phosphoserine. A compositionally biased stretch (basic and acidic residues) spans 666–677 (NREKRKEKEKPF). The interval 666–801 (NREKRKEKEK…KTPPGSKSAP (136 aa)) is disordered. The span at 691–700 (ADSEPESESE) shows a compositional bias: acidic residues. The segment covering 704-715 (KSSSGSGSGESS) has biased composition (low complexity). Composition is skewed to acidic residues over residues 716–726 (SESDNEEEDEE) and 775–784 (VTSESEEEQV).

It belongs to the adaptor complexes large subunit family. In terms of assembly, adaptor protein complex 3 (AP-3) is a heterotetramer composed of two large adaptins (delta-type subunit AP3D1 and beta-type subunit AP3B1 or AP3B2), a medium adaptin (mu-type subunit AP3M1 or AP3M2) and a small adaptin (sigma-type subunit APS1 or AP3S2). AP-3 associates with the BLOC-1 complex.

It is found in the cytoplasmic vesicle. The protein localises to the clathrin-coated vesicle membrane. Its subcellular location is the golgi apparatus. Subunit of non-clathrin- and clathrin-associated adaptor protein complex 3 (AP-3) that plays a role in protein sorting in the late-Golgi/trans-Golgi network (TGN) and/or endosomes. The AP complexes mediate both the recruitment of clathrin to membranes and the recognition of sorting signals within the cytosolic tails of transmembrane cargo molecules. AP-3 appears to be involved in the sorting of a subset of transmembrane proteins targeted to lysosomes and lysosome-related organelles. In concert with the BLOC-1 complex, AP-3 is required to target cargos into vesicles assembled at cell bodies for delivery into neurites and nerve terminals. The polypeptide is AP-3 complex subunit beta-2 (Ap3b2) (Mus musculus (Mouse)).